The following is a 261-amino-acid chain: MTHQTHAYHMVNPSPWPLTGALSALLMTSGLAMWFHFNSPSLLLIGLVTNTLTMYQWWRDIVREGTFQGHHTPIVQKGLRYGMILFIISEVFFFAGFFWAFYHSSLAPTPELGGCWPPTGINPLNPLEVPLLNTSVLLASGVSITWAHHSLMEGNRKNMQQALAITILLGIYFTLLQASEYYETSFTISDGVYGSTFFMATGFHGLHVIIGSTFLTVCLLRQFNFHFTSNHHFGFEAAAWYWHFVDVVWLFLYVSIYWWGS.

Over 1 to 15 (MTHQTHAYHMVNPSP) the chain is Mitochondrial matrix. The chain crosses the membrane as a helical span at residues 16–34 (WPLTGALSALLMTSGLAMW). Topologically, residues 35–40 (FHFNSP) are mitochondrial intermembrane. A helical membrane pass occupies residues 41–66 (SLLLIGLVTNTLTMYQWWRDIVREGT). The Mitochondrial matrix segment spans residues 67 to 72 (FQGHHT). A helical transmembrane segment spans residues 73 to 105 (PIVQKGLRYGMILFIISEVFFFAGFFWAFYHSS). Residues 106–128 (LAPTPELGGCWPPTGINPLNPLE) lie on the Mitochondrial intermembrane side of the membrane. A helical transmembrane segment spans residues 129–152 (VPLLNTSVLLASGVSITWAHHSLM). At 153–155 (EGN) the chain is on the mitochondrial matrix side. The chain crosses the membrane as a helical span at residues 156 to 183 (RKNMQQALAITILLGIYFTLLQASEYYE). Residues 184–190 (TSFTISD) lie on the Mitochondrial intermembrane side of the membrane. The chain crosses the membrane as a helical span at residues 191–223 (GVYGSTFFMATGFHGLHVIIGSTFLTVCLLRQF). Residues 224 to 232 (NFHFTSNHH) lie on the Mitochondrial matrix side of the membrane. A helical membrane pass occupies residues 233–256 (FGFEAAAWYWHFVDVVWLFLYVSI). The Mitochondrial intermembrane portion of the chain corresponds to 257-261 (YWWGS).

The protein belongs to the cytochrome c oxidase subunit 3 family. Component of the cytochrome c oxidase (complex IV, CIV), a multisubunit enzyme composed of 14 subunits. The complex is composed of a catalytic core of 3 subunits MT-CO1, MT-CO2 and MT-CO3, encoded in the mitochondrial DNA, and 11 supernumerary subunits COX4I, COX5A, COX5B, COX6A, COX6B, COX6C, COX7A, COX7B, COX7C, COX8 and NDUFA4, which are encoded in the nuclear genome. The complex exists as a monomer or a dimer and forms supercomplexes (SCs) in the inner mitochondrial membrane with NADH-ubiquinone oxidoreductase (complex I, CI) and ubiquinol-cytochrome c oxidoreductase (cytochrome b-c1 complex, complex III, CIII), resulting in different assemblies (supercomplex SCI(1)III(2)IV(1) and megacomplex MCI(2)III(2)IV(2)).

It is found in the mitochondrion inner membrane. The enzyme catalyses 4 Fe(II)-[cytochrome c] + O2 + 8 H(+)(in) = 4 Fe(III)-[cytochrome c] + 2 H2O + 4 H(+)(out). Functionally, component of the cytochrome c oxidase, the last enzyme in the mitochondrial electron transport chain which drives oxidative phosphorylation. The respiratory chain contains 3 multisubunit complexes succinate dehydrogenase (complex II, CII), ubiquinol-cytochrome c oxidoreductase (cytochrome b-c1 complex, complex III, CIII) and cytochrome c oxidase (complex IV, CIV), that cooperate to transfer electrons derived from NADH and succinate to molecular oxygen, creating an electrochemical gradient over the inner membrane that drives transmembrane transport and the ATP synthase. Cytochrome c oxidase is the component of the respiratory chain that catalyzes the reduction of oxygen to water. Electrons originating from reduced cytochrome c in the intermembrane space (IMS) are transferred via the dinuclear copper A center (CU(A)) of subunit 2 and heme A of subunit 1 to the active site in subunit 1, a binuclear center (BNC) formed by heme A3 and copper B (CU(B)). The BNC reduces molecular oxygen to 2 water molecules using 4 electrons from cytochrome c in the IMS and 4 protons from the mitochondrial matrix. In Oryctolagus cuniculus (Rabbit), this protein is Cytochrome c oxidase subunit 3 (MT-CO3).